A 550-amino-acid chain; its full sequence is O-phosphoserine--tRNA(Cys) ligase (550 aa).

Residues 1 to 32 (MRFNPQDWKEKSHTNFEGAWHDGPSVITPPGE) form a disordered region. Residues 212–214 (HMT), 257–259 (SAS), 299–300 (YY), and Asn342 each bind substrate.

It belongs to the class-II aminoacyl-tRNA synthetase family. O-phosphoseryl-tRNA(Cys) synthetase subfamily. In terms of assembly, homotetramer. Interacts with SepCysS.

It catalyses the reaction tRNA(Cys) + O-phospho-L-serine + ATP = O-phospho-L-seryl-tRNA(Cys) + AMP + diphosphate. Functionally, catalyzes the attachment of O-phosphoserine (Sep) to tRNA(Cys). The sequence is that of O-phosphoserine--tRNA(Cys) ligase from Methanoregula boonei (strain DSM 21154 / JCM 14090 / 6A8).